We begin with the raw amino-acid sequence, 829 residues long: G-type lectin S-receptor-like serine/threonine-protein kinase At1g34300 (829 aa).

The signal sequence occupies residues methionine 1–serine 25. 2 consecutive Bulb-type lectin domains span residues threonine 26–aspartate 140 and threonine 143–alanine 260. Residues threonine 26–histidine 421 are Extracellular-facing. Residues asparagine 46, asparagine 98, asparagine 130, asparagine 151, asparagine 172, asparagine 178, asparagine 189, and asparagine 195 are each glycosylated (N-linked (GlcNAc...) asparagine). The EGF-like domain maps to alanine 264–valine 301. Disulfide bonds link cysteine 268–cysteine 280, cysteine 274–cysteine 289, cysteine 317–cysteine 399, cysteine 350–cysteine 373, and cysteine 354–cysteine 360. N-linked (GlcNAc...) asparagine glycosylation is found at asparagine 283 and asparagine 320. An Apple domain is found at cysteine 317–cysteine 399. Asparagine 416 carries N-linked (GlcNAc...) asparagine glycosylation. The helical transmembrane segment at leucine 422 to glycine 442 threads the bilayer. Topologically, residues leucine 443–serine 829 are cytoplasmic. A Protein kinase domain is found at lysine 484–isoleucine 759. ATP contacts are provided by residues leucine 490–valine 498 and lysine 512. Position 532 is a phosphoserine (serine 532). Positions aspartate 572–threonine 589 are caM-binding. Residue aspartate 608 is the Proton acceptor of the active site. Phosphoserine occurs at positions 625 and 799.

Belongs to the protein kinase superfamily. Ser/Thr protein kinase family.

The protein localises to the cell membrane. The enzyme catalyses L-seryl-[protein] + ATP = O-phospho-L-seryl-[protein] + ADP + H(+). It carries out the reaction L-threonyl-[protein] + ATP = O-phospho-L-threonyl-[protein] + ADP + H(+). This chain is G-type lectin S-receptor-like serine/threonine-protein kinase At1g34300, found in Arabidopsis thaliana (Mouse-ear cress).